The primary structure comprises 138 residues: Small ribosomal subunit protein uS11c (138 aa).

The tract at residues M1–R23 is disordered.

Belongs to the universal ribosomal protein uS11 family. Part of the 30S ribosomal subunit.

The protein resides in the plastid. Its subcellular location is the chloroplast. In Ipomoea purpurea (Common morning glory), this protein is Small ribosomal subunit protein uS11c.